Consider the following 192-residue polypeptide: Amelogenin, Y isoform (192 aa).

Residues 1–16 form the signal peptide; sequence MGTWILFACLLGAAYS. A disordered region spans residues 73–192; sequence QSPQNHALQP…TDKTKREEVD (120 aa). A compositionally biased stretch (low complexity) spans 87–105; it reads PMVPAQQPVVPQQPMMPVP. Positions 108 to 117 are enriched in polar residues; it reads HSMTPIQHHQ. Residues 132-173 are compositionally biased toward pro residues; that stretch reads PIQPQPHQPLQPQPPVHPIQRLPPQPPLPPIFPMQPLPPVLP.

Belongs to the amelogenin family.

It is found in the secreted. It localises to the extracellular space. Its subcellular location is the extracellular matrix. In terms of biological role, plays a role in the biomineralization of teeth. Seems to regulate the formation of crystallites during the secretory stage of tooth enamel development. Thought to play a major role in the structural organization and mineralization of developing enamel. The protein is Amelogenin, Y isoform (AMELY) of Bos taurus (Bovine).